A 761-amino-acid chain; its full sequence is uncharacterized protein (761 aa).

TPR repeat units follow at residues 35-68, 69-102, 103-136, 137-170, 172-203, 204-237, 351-384, and 419-452; these read EEGK…SLNS, AQGL…SDVD, DALY…NPNK, VEIL…KPDF, EAEE…KNPN, EEVY…FPHD, LGVL…NPSA, and ASAG…VKEE. The interval 487–761 is protein sulfotransferase-like; that stretch reads KRPIFVLGMP…PKGLVGYTVG (275 aa).

This sequence in the C-terminal section; belongs to the protein sulfotransferase family.

This is an uncharacterized protein from Aquifex aeolicus (strain VF5).